Consider the following 64-residue polypeptide: Cytochrome c oxidase subunit 9, mitochondrial (64 aa).

At 1–15 (MAATAVRPITGMLRR) the chain is on the mitochondrial matrix side. A helical membrane pass occupies residues 16–36 (GLILDIGIALGVGFVMANGYW). Over 37–64 (YGYHMPRTNARDNYYKKLEEERAARMGA) the chain is Mitochondrial intermembrane.

Belongs to the fungal cytochrome c oxidase subunit 7a family. Component of the cytochrome c oxidase (complex IV, CIV), a multisubunit enzyme composed of 11 subunits. The complex is composed of a catalytic core of 3 subunits Cox1, Cox2 and Cox3, encoded in the mitochondrial DNA, and 8 supernumerary subunits Cox4, Cox5a/Cox5, Cox6, Cox7, Cox8, Cox7a/Cox9, Cox6b/Cox12 and Cox6a/Cox13, which are encoded in the nuclear genome. The complex exists as a monomer or a dimer and forms respiratory supercomplexes (SCs) in the inner mitochondrial membrane with NADH-ubiquinone oxidoreductase (complex I, CI) and ubiquinol-cytochrome c oxidoreductase (cytochrome b-c1 complex, complex III, CIII), resulting in various different assemblies (supercomplexes I(1)IV(1), I(1)III(3)IV(2), III(2)IV(1) and III(2)IV(2) as well as larger supercomplexes of compositions like I(1)III(2)IV(5-6)).

The protein resides in the mitochondrion inner membrane. It functions in the pathway energy metabolism; oxidative phosphorylation. Component of the cytochrome c oxidase, the last enzyme in the mitochondrial electron transport chain which drives oxidative phosphorylation. The respiratory chain contains 3 multisubunit complexes succinate dehydrogenase (complex II, CII), ubiquinol-cytochrome c oxidoreductase (cytochrome b-c1 complex, complex III, CIII) and cytochrome c oxidase (complex IV, CIV), that cooperate to transfer electrons derived from NADH and succinate to molecular oxygen, creating an electrochemical gradient over the inner membrane that drives transmembrane transport and the ATP synthase. Cytochrome c oxidase is the component of the respiratory chain that catalyzes the reduction of oxygen to water. Electrons originating from reduced cytochrome c in the intermembrane space (IMS) are transferred via the dinuclear copper A center (CU(A)) of Cox2 and heme A of Cox1 to the active site in Cox1, a binuclear center (BNC) formed by heme A3 and copper B (CU(B)). The BNC reduces molecular oxygen to 2 water molecules using 4 electrons from cytochrome c in the IMS and 4 protons from the mitochondrial matrix. This Neurospora crassa (strain ATCC 24698 / 74-OR23-1A / CBS 708.71 / DSM 1257 / FGSC 987) protein is Cytochrome c oxidase subunit 9, mitochondrial (cox-17).